Consider the following 543-residue polypeptide: Allantoate permease (543 aa).

Topologically, residues 1 to 80 are cytoplasmic; sequence MSADASTNSN…PEEDRKLRWK (80 aa). Residues 81-97 traverse the membrane as a helical segment; the sequence is IDYCMFPLMCILYAVQF. Over 98-123 the chain is Extracellular; the sequence is MDKISTSSAAVMGLRTDLKMHGDQYS. Residues 124-145 form a helical membrane-spanning segment; that stretch reads WVTSAFYFGYLFMNLGPVQFIF. Over 146–154 the chain is Cytoplasmic; it reads QRTSHMSKM. A helical membrane pass occupies residues 155-171; the sequence is LAVFIVIWGMLLALHAA. The Extracellular portion of the chain corresponds to 172–178; sequence PTVKYPS. Residues 179–200 form a helical membrane-spanning segment; sequence FIVLRVLLGCAESVVTPCFTII. Residues 201-213 lie on the Cytoplasmic side of the membrane; that stretch reads TAQYWKTEEQFTR. A helical membrane pass occupies residues 214–237; the sequence is VSIWFGMNGLGSILINAIAYGVYI. Residues 238 to 248 are Extracellular-facing; it reads HQDSYAIKGWR. The chain crosses the membrane as a helical span at residues 249-269; it reads TLFVITGVITIFIGILIFLWI. Residues 270–317 are Cytoplasmic-facing; it reads PDDPSKARFLSKREKLMVVQRIRSNQQGFGNHEIKKYQIIEALKDVRT. Residues 318–342 form a helical membrane-spanning segment; sequence WLYFLFTVSSNIPNGGISSFMSILL. Residues 343–352 lie on the Extracellular side of the membrane; the sequence is NSDFGYSSKE. The chain crosses the membrane as a helical span at residues 353-377; the sequence is TLLMGLPTGAVELVGCPLFGILAVY. Topologically, residues 378 to 389 are cytoplasmic; it reads AANKKIPFWKYK. The chain crosses the membrane as a helical span at residues 390 to 411; sequence LSWAIFAAVLALIASCMLGFAT. Residues 412–417 lie on the Extracellular side of the membrane; the sequence is NSKKAR. Residues 418-435 form a helical membrane-spanning segment; that stretch reads LAGAYLWYISPVSFICVL. The Cytoplasmic segment spans residues 436–453; sequence SNISANSSGYSKKWTVSS. A helical membrane pass occupies residues 454 to 472; the sequence is INLVAYAAANLAGPQTFIA. Residues 473-482 lie on the Extracellular side of the membrane; the sequence is KQAPKYHGAK. The helical transmembrane segment at 483–504 threads the bilayer; the sequence is VAMVVCYAVMIVLLSILLIVNL. Over 505–543 the chain is Cytoplasmic; the sequence is RENKRRDKIAAERGFPEETENLEFSDLTDFENPNFRYTL.

The protein belongs to the major facilitator superfamily. Allantoate permease family.

It is found in the membrane. Its function is as follows. Component of the allantoate transport system. The protein is Allantoate permease (DAL5) of Saccharomyces cerevisiae (strain ATCC 204508 / S288c) (Baker's yeast).